We begin with the raw amino-acid sequence, 452 residues long: UDP-N-acetylmuramoylalanine--D-glutamate ligase (452 aa).

Residue 115–121 participates in ATP binding; the sequence is GTNGKTT.

This sequence belongs to the MurCDEF family.

It localises to the cytoplasm. The enzyme catalyses UDP-N-acetyl-alpha-D-muramoyl-L-alanine + D-glutamate + ATP = UDP-N-acetyl-alpha-D-muramoyl-L-alanyl-D-glutamate + ADP + phosphate + H(+). It functions in the pathway cell wall biogenesis; peptidoglycan biosynthesis. Cell wall formation. Catalyzes the addition of glutamate to the nucleotide precursor UDP-N-acetylmuramoyl-L-alanine (UMA). The protein is UDP-N-acetylmuramoylalanine--D-glutamate ligase of Elusimicrobium minutum (strain Pei191).